The primary structure comprises 291 residues: MELIIATRKSKLAQVQTEKVMELLKKKENVDSKKLLVMTEGDRRLDVSLNKIGGKGLFVKEIELALLNKEAHGAVHSMKDVPFELPSEFELVAMPEREDIRDAFVSLNGSTLSNLRKGARIGTSSIRRAEQLKLFRDDLEIVPIRGNVQTRIKKITEENLDGIILAAAGLKRLGMEDVISDYFDPKVFLPAIGQGALGIECLKDGEFNDYFKALDSKEVRTTVEAERSFMKVLNGGCHSLIGAYSEVKDNDLYMIGTFTVNNRIVKKDILGNKEDNILLGKKLAEKILGEV.

C237 is modified (S-(dipyrrolylmethanemethyl)cysteine).

This sequence belongs to the HMBS family. As to quaternary structure, monomer. The cofactor is dipyrromethane.

The enzyme catalyses 4 porphobilinogen + H2O = hydroxymethylbilane + 4 NH4(+). The protein operates within porphyrin-containing compound metabolism; protoporphyrin-IX biosynthesis; coproporphyrinogen-III from 5-aminolevulinate: step 2/4. Tetrapolymerization of the monopyrrole PBG into the hydroxymethylbilane pre-uroporphyrinogen in several discrete steps. In Clostridium perfringens (strain SM101 / Type A), this protein is Porphobilinogen deaminase.